The chain runs to 172 residues: Small ribosomal subunit protein uS5 (172 aa).

The 64-residue stretch at 16–79 (LKDRLVAINR…ESAKKNLVKV (64 aa)) folds into the S5 DRBM domain.

This sequence belongs to the universal ribosomal protein uS5 family. Part of the 30S ribosomal subunit. Contacts proteins S4 and S8.

In terms of biological role, with S4 and S12 plays an important role in translational accuracy. Functionally, located at the back of the 30S subunit body where it stabilizes the conformation of the head with respect to the body. This chain is Small ribosomal subunit protein uS5, found in Bacteroides thetaiotaomicron (strain ATCC 29148 / DSM 2079 / JCM 5827 / CCUG 10774 / NCTC 10582 / VPI-5482 / E50).